A 449-amino-acid chain; its full sequence is Ribosomal protein uS12 methylthiotransferase RimO (449 aa).

One can recognise an MTTase N-terminal domain in the interval 16–126; the sequence is PKISFVSLGC…VMEAVHAAIA (111 aa). [4Fe-4S] cluster is bound by residues cysteine 25, cysteine 61, cysteine 90, cysteine 157, cysteine 161, and cysteine 164. The Radical SAM core domain occupies 143–381; that stretch reads LTPRHYAYLK…MEHQQKISAR (239 aa). The TRAM domain occupies 384-449; sequence REKIGKHVSV…DAYDLHGKAV (66 aa).

Belongs to the methylthiotransferase family. RimO subfamily. The cofactor is [4Fe-4S] cluster.

Its subcellular location is the cytoplasm. The enzyme catalyses L-aspartate(89)-[ribosomal protein uS12]-hydrogen + (sulfur carrier)-SH + AH2 + 2 S-adenosyl-L-methionine = 3-methylsulfanyl-L-aspartate(89)-[ribosomal protein uS12]-hydrogen + (sulfur carrier)-H + 5'-deoxyadenosine + L-methionine + A + S-adenosyl-L-homocysteine + 2 H(+). In terms of biological role, catalyzes the methylthiolation of an aspartic acid residue of ribosomal protein uS12. In Beijerinckia indica subsp. indica (strain ATCC 9039 / DSM 1715 / NCIMB 8712), this protein is Ribosomal protein uS12 methylthiotransferase RimO.